The sequence spans 426 residues: MYVLKNGQVLNASGKLESKDVLIQNGKVNLIADSIEVTSGEEFDATGKLITPGFIDVHVHLREPGGEHKETILTGTKAAARGGYTTICSMPNTKPVPDSKEVMESIQAKIKETAKVRVLPYASITTSLGTDELVDFEALKEAGAFAFTDDGVGVQLAGTMYEAMKRAAALDMAIVAHCEDNSLIYGGVVHDGIFAEKEGLKGIPNIAESVQIARDVLLAEAAGCHYHVCHISTKESVRVVRDAKRAGIRVTAEVSPHHLILDEEAIPGNDGNWKMNPPLRSKEDRAALLEGLLDGTIDFIATDHAPHAAEEKNVPMEQAAFGIVGLETAFPLLYTHFVKTNEWTLKQLIDWMTVKPAECFKLPYGKLEEGSVADIVVLDLEKEANIDPDTFYSKGKNTPFVGETCIGWPVATFAEGTLVYNEGEIK.

The Zn(2+) site is built by His-58 and His-60. Residues 60–62 (HLR) and Asn-92 contribute to the substrate site. Zn(2+) is bound by residues Asp-150, His-177, and His-230. Asn-276 contributes to the substrate binding site. Asp-303 is a Zn(2+) binding site. Residue Asp-303 is part of the active site. Substrate contacts are provided by residues His-307 and 321–322 (FG).

It belongs to the metallo-dependent hydrolases superfamily. DHOase family. Class I DHOase subfamily. It depends on Zn(2+) as a cofactor.

The catalysed reaction is (S)-dihydroorotate + H2O = N-carbamoyl-L-aspartate + H(+). The protein operates within pyrimidine metabolism; UMP biosynthesis via de novo pathway; (S)-dihydroorotate from bicarbonate: step 3/3. Catalyzes the reversible cyclization of carbamoyl aspartate to dihydroorotate. This Listeria monocytogenes serovar 1/2a (strain ATCC BAA-679 / EGD-e) protein is Dihydroorotase.